The primary structure comprises 748 residues: Putative transmembrane protein ORF88 (748 aa).

A signal peptide spans 1-20 (MIIMKSIILLLAWFLTKTQA). Topologically, residues 21–723 (NMLTESLYLS…LNLAPFKTLS (703 aa)) are extracellular. 8 N-linked (GlcNAc...) asparagine; by host glycosylation sites follow: N55, N78, N99, N152, N189, N390, N467, and N499. The segment at 531-574 (LTFDSPPPPPTTTQAPPPPPTTTQAPPPPPTTTQAPPPPIVINT) is disordered. Pro residues predominate over residues 535–570 (SPPPPPTTTQAPPPPPTTTQAPPPPPTTTQAPPPPI). Residues N573, N584, N599, N612, and N617 are each glycosylated (N-linked (GlcNAc...) asparagine; by host). Positions 650 to 680 (PSIGRAPIPPPDVPVEPPRSIPTTNAPSPEE) are disordered. Residues 656 to 669 (PIPPPDVPVEPPRS) show a composition bias toward pro residues. A helical membrane pass occupies residues 724–744 (YAGIGVVSFALLFTILVVCLI). Over 745–748 (KFSI) the chain is Cytoplasmic.

Its subcellular location is the host membrane. This chain is Putative transmembrane protein ORF88, found in Magallana gigas (Pacific oyster).